The sequence spans 121 residues: uncharacterized protein (121 aa).

An N-terminal signal peptide occupies residues 1–23 (MNFSTVFQAIIAVLGLTTVTALA). N-linked (GlcNAc...) asparagine glycosylation is found at asparagine 68 and asparagine 84.

Post-translationally, N-glycosylated.

This is an uncharacterized protein from Saccharomyces cerevisiae (strain ATCC 204508 / S288c) (Baker's yeast).